We begin with the raw amino-acid sequence, 473 residues long: Adenosylhomocysteinase (473 aa).

T64, D139, and E199 together coordinate substrate. An NAD(+)-binding site is contributed by 200–202 (TTT). 2 residues coordinate substrate: K229 and D233. Residues N234, 263–268 (GYGDVG), E286, N321, 342–344 (IGH), and N387 contribute to the NAD(+) site.

The protein belongs to the adenosylhomocysteinase family. It depends on NAD(+) as a cofactor.

Its subcellular location is the cytoplasm. The enzyme catalyses S-adenosyl-L-homocysteine + H2O = L-homocysteine + adenosine. It participates in amino-acid biosynthesis; L-homocysteine biosynthesis; L-homocysteine from S-adenosyl-L-homocysteine: step 1/1. Functionally, may play a key role in the regulation of the intracellular concentration of adenosylhomocysteine. The chain is Adenosylhomocysteinase from Paraburkholderia phytofirmans (strain DSM 17436 / LMG 22146 / PsJN) (Burkholderia phytofirmans).